The following is a 209-amino-acid chain: Uracil phosphoribosyltransferase (209 aa).

Residues R79, R104, and 131 to 139 each bind 5-phospho-alpha-D-ribose 1-diphosphate; that span reads DPMLATGAS. Uracil-binding positions include I194 and 199-201; that span reads GDA. Residue D200 participates in 5-phospho-alpha-D-ribose 1-diphosphate binding.

The protein belongs to the UPRTase family. Requires Mg(2+) as cofactor.

It carries out the reaction UMP + diphosphate = 5-phospho-alpha-D-ribose 1-diphosphate + uracil. Its pathway is pyrimidine metabolism; UMP biosynthesis via salvage pathway; UMP from uracil: step 1/1. With respect to regulation, allosterically activated by GTP. In terms of biological role, catalyzes the conversion of uracil and 5-phospho-alpha-D-ribose 1-diphosphate (PRPP) to UMP and diphosphate. The chain is Uracil phosphoribosyltransferase from Staphylococcus haemolyticus (strain JCSC1435).